Here is a 475-residue protein sequence, read N- to C-terminus: MSPQTETKASVEFKAGVKDYKLTYYTPEYETLDTDILAAFRVSPQPGVPPEEAGAAVAAESSTGTWTTVWTDGLTNLDRYKGRCYHIEPVAGEENQYICYVAYPLDLFEEGSVTNMFTSIVGNVFGFKALRALRLEDLRIPVAYVKTFQGPPHGIQVERDKLNKYGRPLLGCTIKPKLGLSAKNYGRAVYECLRGGLDFTKDDENVNSQPFMRWRDRFLFCAEALYKAQAETGEIKGHYLNATAGTCEDMMKRAVFARELGVPIVMHDYLTGGFTANTTLSHYCRDNGLLLHIHRAMHAVIDRQKNHGMHFRVLAKALRLSGGDHIHSGTVVGKLEGERDITLGFVDLLRDDYTEKDRSRGIYFTQSWVSTPGVLPVASGGIHVWHMPALTEIFGDDSVLQFGGGTLGHPWGNAPGAVANRVALEACVQARNEGRDLAREGNTIIREATKWSPELAAACEVWKEIKFEFPAMDTV.

A propeptide spanning residues 1–2 (MS) is cleaved from the precursor. Pro-3 carries the post-translational modification N-acetylproline. Positions 65, 123, and 173 each coordinate substrate. The active-site Proton acceptor is Lys-175. Lys-177 contacts substrate. Lys-201, Asp-203, and Glu-204 together coordinate Mg(2+). Position 201 is an N6-carboxylysine (Lys-201). Substrate contacts are provided by Glu-204, His-294, Arg-295, His-327, Lys-334, Ser-379, Gly-381, Gly-403, and Gly-404. His-294 functions as the Proton acceptor in the catalytic mechanism.

It belongs to the RuBisCO large chain family. Type I subfamily. In terms of assembly, heterohexadecamer of 8 large chains and 8 small chains. Requires Mg(2+) as cofactor. In terms of processing, the disulfide bond which can form between Cys-247 in the large chain dimeric partners within the hexadecamer appears to be associated with oxidative stress and protein turnover. The disulfide bonds reported in 1RBO may be the result of oxidation during crystallization.

Its subcellular location is the plastid. The protein resides in the chloroplast. The enzyme catalyses 2 (2R)-3-phosphoglycerate + 2 H(+) = D-ribulose 1,5-bisphosphate + CO2 + H2O. The catalysed reaction is D-ribulose 1,5-bisphosphate + O2 = 2-phosphoglycolate + (2R)-3-phosphoglycerate + 2 H(+). Its activity is regulated as follows. Abscisic acid (ABA) causes weak inhibition of RuBisCO catalytic activity, but more potent inhibition of RuBisCO activation. Functionally, ruBisCO catalyzes two reactions: the carboxylation of D-ribulose 1,5-bisphosphate, the primary event in carbon dioxide fixation, as well as the oxidative fragmentation of the pentose substrate in the photorespiration process. Both reactions occur simultaneously and in competition at the same active site. Binds to abscisic acid (ABA) which has weakly inhibits carboxylation and more strongly inhibits enzyme activation. This Spinacia oleracea (Spinach) protein is Ribulose bisphosphate carboxylase large chain.